Here is a 38-residue protein sequence, read N- to C-terminus: Large ribosomal subunit protein bL12 (38 aa).

This sequence belongs to the bacterial ribosomal protein bL12 family. In terms of assembly, homodimer. Part of the ribosomal stalk of the 50S ribosomal subunit. Forms a multimeric L10(L12)X complex, where L10 forms an elongated spine to which 2 to 4 L12 dimers bind in a sequential fashion. Binds GTP-bound translation factors.

Functionally, forms part of the ribosomal stalk which helps the ribosome interact with GTP-bound translation factors. Is thus essential for accurate translation. The sequence is that of Large ribosomal subunit protein bL12 (rplL) from Salinivibrio costicola (Vibrio costicola).